A 93-amino-acid chain; its full sequence is DNA/RNA-binding protein Alba 2 (93 aa).

The protein belongs to the histone-like Alba family.

Its subcellular location is the cytoplasm. The protein resides in the chromosome. Functionally, binds double-stranded DNA tightly but without sequence specificity. Involved in DNA compaction. In Methanopyrus kandleri (strain AV19 / DSM 6324 / JCM 9639 / NBRC 100938), this protein is DNA/RNA-binding protein Alba 2.